A 290-amino-acid chain; its full sequence is Poly-beta-1,6-N-acetyl-D-glucosamine N-deacetylase (290 aa).

The N-terminal stretch at 1 to 28 (MKYRKFIILVLSILIILPVSTLDGHHIA) is a signal peptide. Residues 114–290 (RSVWINFDDM…KRWDGFHEKD (177 aa)) form the NodB homology domain.

It belongs to the polysaccharide deacetylase family.

The protein resides in the secreted. The protein localises to the cell wall. Its function is as follows. Catalyzes the N-deacetylation of poly-beta-1,6-N-acetyl-D-glucosamine (PNAG, also referred to as PIA), a biofilm adhesin polysaccharide. N-deacetylation is crucial for attachment of the polysaccharide to the bacterial cell surface; it leads to the introduction of positive charges in the otherwise neutral PIA polymer, allowing electrostatic interactions. This Staphylococcus aureus (strain NCTC 8325 / PS 47) protein is Poly-beta-1,6-N-acetyl-D-glucosamine N-deacetylase (icaB).